The chain runs to 563 residues: Group II intron-interrupted relaxase LtrB (563 aa).

The active site involves Tyr-44. Mg(2+) contacts are provided by His-159 and His-161.

The protein belongs to the mobilization (MOB) protein type 1 family. Mg(2+) is required as a cofactor. It depends on Mn(2+) as a cofactor.

Functionally, mediates initiation of conjugal transfer possibly by introducing a single-stranded nick at the potential origin of transfer. This is Group II intron-interrupted relaxase LtrB (ltrBE1) from Lactococcus lactis subsp. cremoris (strain MG1363).